The chain runs to 255 residues: Ly6/PLAUR domain-containing protein 8 (255 aa).

The signal sequence occupies residues 1-20; that stretch reads MRGVFIAGVIAAFAITVVDS. N-linked (GlcNAc...) asparagine glycosylation is found at Asn22, Asn30, Asn53, Asn72, Asn76, Asn105, Asn115, Asn128, Asn154, Asn169, Asn179, Asn200, and Asn210. Residues 121–170 form the UPAR/Ly6 domain; the sequence is CMSCYGHNKTLCEEKPQKCYEGEQCVFIIAEMVNGSGRVELKGCSDISNS. The GPI-anchor amidated serine moiety is linked to residue Ser233. Residues 234-255 constitute a propeptide, removed in mature form; sequence MGTKASFTSSIFGSLLLLKLLF.

It belongs to the CNF-like-inhibitor family. Post-translationally, highly N-glycosylated. Not O-glycosylated. In terms of processing, GPI-anchored. The GPI-anchor is cleaved, leading to secretion into the colonic lumen. In terms of tissue distribution, specifically present in enterocytes located at the uppermost epithelial layer of the colon (at protein level). Exclusively expressed in the large intestine: specifically expressed on the apical surface of epithelial cells located at the uppermost layer of the colonic gland.

It is found in the cell membrane. The protein localises to the secreted. Its function is as follows. Secreted protein specifically required to prevent invasion of Gram-negative bacteria in the inner mucus layer of the colon epithelium, a portion of the large intestine which is free of commensal microbiota. Prevents invasion of flagellated microbiota by binding to the flagellum of bacteria, such as P.mirabilis, thereby inhibiting bacterial motility in the intestinal lumen. Segregation of intestinal bacteria and epithelial cells in the colon is required to preserve intestinal homeostasis. This chain is Ly6/PLAUR domain-containing protein 8, found in Mus musculus (Mouse).